We begin with the raw amino-acid sequence, 747 residues long: UPF0313 protein PA4928 (747 aa).

The Radical SAM core domain maps to 371 to 640 (AYEMIRFSVN…KSDQQRRLHK (270 aa)). [4Fe-4S] cluster-binding residues include Cys385, Cys389, and Cys392. Residues 670–747 (GKHHLVPTYQ…KKSRQPNIPR (78 aa)) are disordered.

The protein belongs to the UPF0313 family. [4Fe-4S] cluster is required as a cofactor.

The polypeptide is UPF0313 protein PA4928 (Pseudomonas aeruginosa (strain ATCC 15692 / DSM 22644 / CIP 104116 / JCM 14847 / LMG 12228 / 1C / PRS 101 / PAO1)).